The chain runs to 299 residues: Oxygen-dependent coproporphyrinogen-III oxidase (299 aa).

Serine 92 serves as a coordination point for substrate. Residues histidine 96 and histidine 106 each contribute to the Mn(2+) site. Histidine 106 serves as the catalytic Proton donor. 108 to 110 contributes to the substrate binding site; it reads NVR. Residues histidine 145 and histidine 175 each contribute to the Mn(2+) site. Residues 240–275 form an important for dimerization region; that stretch reads YVEFNLVWDRGTLFGLQTGGRTESILMSMPPLVRWE. 258–260 provides a ligand contact to substrate; that stretch reads GGR.

Belongs to the aerobic coproporphyrinogen-III oxidase family. As to quaternary structure, homodimer. Mn(2+) is required as a cofactor.

It localises to the cytoplasm. The catalysed reaction is coproporphyrinogen III + O2 + 2 H(+) = protoporphyrinogen IX + 2 CO2 + 2 H2O. It participates in porphyrin-containing compound metabolism; protoporphyrin-IX biosynthesis; protoporphyrinogen-IX from coproporphyrinogen-III (O2 route): step 1/1. In terms of biological role, involved in the heme biosynthesis. Catalyzes the aerobic oxidative decarboxylation of propionate groups of rings A and B of coproporphyrinogen-III to yield the vinyl groups in protoporphyrinogen-IX. The polypeptide is Oxygen-dependent coproporphyrinogen-III oxidase (Escherichia coli O7:K1 (strain IAI39 / ExPEC)).